The following is a 111-amino-acid chain: Prothymosin alpha-A (111 aa).

The segment at 1–111 (MSDTAVDASV…IKKQKTDEDD (111 aa)) is disordered. Over residues 9-42 (SVEKTTKDLKAKEKEVVEEAENGKDKPTNGKAEN) the composition is skewed to basic and acidic residues. Acidic residues-rich tracts occupy residues 43-81 (EENG…DEVE) and 90-100 (EDDEDDDDDDV). Residues 101–111 (EIKKQKTDEDD) are compositionally biased toward basic and acidic residues.

The protein belongs to the pro/parathymosin family.

The protein resides in the nucleus. This is Prothymosin alpha-A (ptma-a) from Xenopus laevis (African clawed frog).